The sequence spans 206 residues: Ribosomal RNA small subunit methyltransferase G (206 aa).

Residues glycine 71, phenylalanine 76, 122 to 123 (AE), and arginine 135 each bind S-adenosyl-L-methionine.

The protein belongs to the methyltransferase superfamily. RNA methyltransferase RsmG family.

Its subcellular location is the cytoplasm. Specifically methylates the N7 position of a guanine in 16S rRNA. This Bacteroides fragilis (strain ATCC 25285 / DSM 2151 / CCUG 4856 / JCM 11019 / LMG 10263 / NCTC 9343 / Onslow / VPI 2553 / EN-2) protein is Ribosomal RNA small subunit methyltransferase G.